Reading from the N-terminus, the 603-residue chain is Proline--tRNA ligase (603 aa).

It belongs to the class-II aminoacyl-tRNA synthetase family. ProS type 1 subfamily. As to quaternary structure, homodimer.

The protein localises to the cytoplasm. It catalyses the reaction tRNA(Pro) + L-proline + ATP = L-prolyl-tRNA(Pro) + AMP + diphosphate. In terms of biological role, catalyzes the attachment of proline to tRNA(Pro) in a two-step reaction: proline is first activated by ATP to form Pro-AMP and then transferred to the acceptor end of tRNA(Pro). As ProRS can inadvertently accommodate and process non-cognate amino acids such as alanine and cysteine, to avoid such errors it has two additional distinct editing activities against alanine. One activity is designated as 'pretransfer' editing and involves the tRNA(Pro)-independent hydrolysis of activated Ala-AMP. The other activity is designated 'posttransfer' editing and involves deacylation of mischarged Ala-tRNA(Pro). The misacylated Cys-tRNA(Pro) is not edited by ProRS. In Synechocystis sp. (strain ATCC 27184 / PCC 6803 / Kazusa), this protein is Proline--tRNA ligase.